The sequence spans 382 residues: Gap junction alpha-1 protein (382 aa).

Residues 2-23 lie on the Cytoplasmic side of the membrane; that stretch reads GDWSALGKLLDKVQAYSTAGGK. The residue at position 5 (Ser5) is a Phosphoserine. A helical membrane pass occupies residues 24 to 44; that stretch reads VWLSVLFIFRILLLGTAVESA. The Extracellular segment spans residues 45 to 76; sequence WGDEQSAFRCNTQQPGCENVCYDKSFPISHVR. 2 disulfide bridges follow: Cys54/Cys192 and Cys187/Cys198. A helical membrane pass occupies residues 77–97; the sequence is FWVLQIIFVSVPTLLYLAHVF. The Cytoplasmic segment spans residues 98-155; the sequence is YVMRKEEKLNKKEEELKVAQTDGANVDMHLKQIEIKKFKYGIEEHGKVKMRGGLLRTY. Lys144 participates in a covalent cross-link: Glycyl lysine isopeptide (Lys-Gly) (interchain with G-Cter in SUMO). Residues 156–176 traverse the membrane as a helical segment; sequence IISILFKSVFEVAFLLIQWYI. The Extracellular portion of the chain corresponds to 177 to 207; the sequence is YGFSLSAVYTCKRDPCPHQVDCFLSRPTEKT. Residues 208 to 228 form a helical membrane-spanning segment; sequence IFIIFMLVVSLVSLALNIIEL. Residues 229-382 lie on the Cytoplasmic side of the membrane; it reads FYVFFKGIKD…SRPRPDDLEI (154 aa). Residue Lys237 forms a Glycyl lysine isopeptide (Lys-Gly) (interchain with G-Cter in SUMO) linkage. The segment at 244–382 is interaction with NOV; that stretch reads SDLYHATTGP…SRPRPDDLEI (139 aa). Tyr247 bears the Phosphotyrosine mark. Phosphoserine occurs at positions 255, 257, and 262. The interval 264 to 382 is interaction with UBQLN4; sequence TYAYFNGCSS…SRPRPDDLEI (119 aa). Cys271 is modified (S-nitrosocysteine). Thr275 carries the post-translational modification Phosphothreonine. Phosphoserine occurs at positions 306 and 314. Polar residues predominate over residues 317–332; the sequence is QNRMGQAGSTISNSHA. The interval 317-382 is disordered; the sequence is QNRMGQAGST…SRPRPDDLEI (66 aa). Phosphoserine; by CK1 is present on Ser325. Thr326 carries the phosphothreonine modification. Residues Ser328 and Ser330 each carry the phosphoserine; by CK1 modification. Phosphoserine is present on residues Ser344 and Ser365. Residues 362–374 are compositionally biased toward low complexity; sequence RPSSRASSRASSR. Ser368 is subject to Phosphoserine; by PKC/PRKCG and PKC/PRKCD. A phosphoserine mark is found at Ser369 and Ser373.

The protein belongs to the connexin family. Alpha-type (group II) subfamily. In terms of assembly, a connexon is composed of a hexamer of connexins. Interacts with SGSM3. Interacts with RIC1/CIP150. Interacts with CNST and CSNK1D. Interacts (via C-terminus) with TJP1. Interacts (via C-terminus) with SRC (via SH3 domain). Interacts (not ubiquitinated) with UBQLN4 (via UBA domain). Interacts with NOV. Interacts with TMEM65. Interacts with ANK3/ANKG and PKP2. In terms of processing, phosphorylation at Ser-325, Ser-328 and Ser-330 by CK1 modulates gap junction assembly. Phosphorylated at Ser-368 by PRKCG; phosphorylation induces disassembly of gap junction plaques and inhibition of gap junction activity. Phosphorylation at Ser-368 by PRKCD triggers its internalization into small vesicles leading to proteasome-mediated degradation. Sumoylated with SUMO1, SUMO2 and SUMO3, which may regulate the level of functional Cx43 gap junctions at the plasma membrane. May be desumoylated by SENP1 or SENP2. Post-translationally, S-nitrosylation at Cys-271 is enriched at the muscle endothelial gap junction in arteries, it augments channel permeability and may regulate of smooth muscle cell to endothelial cell communication. In terms of processing, acetylated in the developing cortex; leading to delocalization from the cell membrane.

The protein resides in the cell membrane. The protein localises to the cell junction. Its subcellular location is the gap junction. It is found in the endoplasmic reticulum. Functionally, gap junction protein that acts as a regulator of bladder capacity. A gap junction consists of a cluster of closely packed pairs of transmembrane channels, the connexons, through which materials of low MW diffuse from one cell to a neighboring cell. May play a critical role in the physiology of hearing by participating in the recycling of potassium to the cochlear endolymph. Negative regulator of bladder functional capacity: acts by enhancing intercellular electrical and chemical transmission, thus sensitizing bladder muscles to cholinergic neural stimuli and causing them to contract. May play a role in cell growth inhibition through the regulation of NOV expression and localization. Plays an essential role in gap junction communication in the ventricles. This chain is Gap junction alpha-1 protein (GJA1), found in Erinaceus europaeus (Western European hedgehog).